The sequence spans 448 residues: Glutamyl-tRNA reductase (448 aa).

Substrate is bound by residues 52–55, S105, 110–112, and Q116; these read TCNR and EDQ. The active-site Nucleophile is the C53. 184–189 serves as a coordination point for NADP(+); sequence GAGEMG. The segment at 406-435 is disordered; it reads DPDFGGPDQATPPEFTKGMSVEDIPDGMRD.

It belongs to the glutamyl-tRNA reductase family. Homodimer.

The catalysed reaction is (S)-4-amino-5-oxopentanoate + tRNA(Glu) + NADP(+) = L-glutamyl-tRNA(Glu) + NADPH + H(+). Its pathway is porphyrin-containing compound metabolism; protoporphyrin-IX biosynthesis; 5-aminolevulinate from L-glutamyl-tRNA(Glu): step 1/2. In terms of biological role, catalyzes the NADPH-dependent reduction of glutamyl-tRNA(Glu) to glutamate 1-semialdehyde (GSA). The polypeptide is Glutamyl-tRNA reductase (Haloarcula marismortui (strain ATCC 43049 / DSM 3752 / JCM 8966 / VKM B-1809) (Halobacterium marismortui)).